The following is a 1742-amino-acid chain: Unconventional myosin-Vc (1742 aa).

Residue Ala2 is modified to N-acetylalanine. The Myosin N-terminal SH3-like domain occupies 8 to 62; that stretch reads TQYNRVWIPDPEEVWKSAEIAKDYRVGDKVLRLLLEDGTELDYSVNPESLPPLRN. One can recognise a Myosin motor domain in the interval 67–753; it reads VGENDLTALS…QVAYLEKLRL (687 aa). 161-168 lines the ATP pocket; sequence GESGAGKT. The interval 632 to 654 is actin-binding; that stretch reads LYLLMETLNATTPHYVRCIKPND. 5 IQ domains span residues 756 to 779, 780 to 806, 807 to 829, 830 to 854, and 855 to 884; these read LRQS…FLRE, RRAA…VALK, EAWA…LYQL, IRMA…RKML, and EEHK…FVLN. Positions 884 to 1351 form a coiled coil; it reads NIQLTYRVQR…SKTIGKANDV (468 aa). The region spanning 1421–1697 is the Dilute domain; it reads NSTINGIKQV…VRKVQALLNS (277 aa).

Belongs to the TRAFAC class myosin-kinesin ATPase superfamily. Myosin family. As to expression, expressed chiefly in non-neuronal tissues. Particularly abundant in epithelial and glandular tissues including pancreas, prostate, mammary, stomach, colon and lung.

May be involved in transferrin trafficking. Likely to power actin-based membrane trafficking in many physiologically crucial tissues. In Homo sapiens (Human), this protein is Unconventional myosin-Vc (MYO5C).